A 142-amino-acid polypeptide reads, in one-letter code: Large ribosomal subunit protein uL13 (142 aa).

Belongs to the universal ribosomal protein uL13 family. In terms of assembly, part of the 50S ribosomal subunit.

Functionally, this protein is one of the early assembly proteins of the 50S ribosomal subunit, although it is not seen to bind rRNA by itself. It is important during the early stages of 50S assembly. The polypeptide is Large ribosomal subunit protein uL13 (Acidovorax sp. (strain JS42)).